A 303-amino-acid polypeptide reads, in one-letter code: UDP-N-acetylenolpyruvoylglucosamine reductase (303 aa).

The FAD-binding PCMH-type domain maps to 23-188 (KVGGPADYLV…ISAKFALKPG (166 aa)). Residue R167 is part of the active site. S217 functions as the Proton donor in the catalytic mechanism. E287 is an active-site residue.

Belongs to the MurB family. FAD is required as a cofactor.

It is found in the cytoplasm. It catalyses the reaction UDP-N-acetyl-alpha-D-muramate + NADP(+) = UDP-N-acetyl-3-O-(1-carboxyvinyl)-alpha-D-glucosamine + NADPH + H(+). Its pathway is cell wall biogenesis; peptidoglycan biosynthesis. In terms of biological role, cell wall formation. This chain is UDP-N-acetylenolpyruvoylglucosamine reductase, found in Streptococcus uberis (strain ATCC BAA-854 / 0140J).